The chain runs to 357 residues: Histidine biosynthesis bifunctional protein HisB (357 aa).

A histidinol-phosphatase region spans residues 1-168; sequence MTPILFIDRD…GIAHALADAP (168 aa). Asp-8 acts as the Nucleophile in catalysis. Mg(2+) is bound by residues Asp-8, Asp-10, and Asp-128. The active-site Proton donor is the Asp-10. Positions 169 to 357 are imidazoleglycerol-phosphate dehydratase; that stretch reads RIAVVQRDTK…TALPTTKGAL (189 aa).

It in the N-terminal section; belongs to the histidinol-phosphatase family. In the C-terminal section; belongs to the imidazoleglycerol-phosphate dehydratase family. It depends on Mg(2+) as a cofactor.

The protein localises to the cytoplasm. It catalyses the reaction D-erythro-1-(imidazol-4-yl)glycerol 3-phosphate = 3-(imidazol-4-yl)-2-oxopropyl phosphate + H2O. The enzyme catalyses L-histidinol phosphate + H2O = L-histidinol + phosphate. The protein operates within amino-acid biosynthesis; L-histidine biosynthesis; L-histidine from 5-phospho-alpha-D-ribose 1-diphosphate: step 6/9. It participates in amino-acid biosynthesis; L-histidine biosynthesis; L-histidine from 5-phospho-alpha-D-ribose 1-diphosphate: step 8/9. In Stenotrophomonas maltophilia (strain R551-3), this protein is Histidine biosynthesis bifunctional protein HisB.